The primary structure comprises 127 residues: Flagellar hook-basal body complex protein FliE (127 aa).

This sequence belongs to the FliE family.

The protein localises to the bacterial flagellum basal body. The chain is Flagellar hook-basal body complex protein FliE from Leptospira interrogans serogroup Icterohaemorrhagiae serovar copenhageni (strain Fiocruz L1-130).